The sequence spans 161 residues: AP-1 complex subunit sigma-1 (161 aa).

This sequence belongs to the adaptor complexes small subunit family. In terms of assembly, adaptor protein complex 1 (AP-1) is a heterotetramer composed of two large adaptins (gamma-type subunit and beta-type subunit), a medium adaptin (mu-type subunit) and a small adaptin (sigma-type subunit). In terms of tissue distribution, expressed in seedlings, roots, stems, leaves, flowers and siliques (developing fruits and seeds).

The protein resides in the golgi apparatus. The protein localises to the cytoplasmic vesicle. It is found in the clathrin-coated vesicle membrane. Functionally, subunit of clathrin-associated adaptor protein complex 1 that plays a role in protein sorting at the trans-Golgi network and early endosomes (TGN/EE). The AP complexes mediate the recruitment of clathrin to membranes and the recognition of sorting signals within the cytosolic tails of transmembrane cargo molecules. The chain is AP-1 complex subunit sigma-1 (AAP19-1) from Arabidopsis thaliana (Mouse-ear cress).